Here is a 207-residue protein sequence, read N- to C-terminus: Thiamine-phosphate synthase (207 aa).

4-amino-2-methyl-5-(diphosphooxymethyl)pyrimidine contacts are provided by residues 35-39 (QYRDK) and asparagine 67. Positions 68 and 86 each coordinate Mg(2+). Threonine 105 contacts 4-amino-2-methyl-5-(diphosphooxymethyl)pyrimidine. 132 to 134 (SVT) serves as a coordination point for 2-[(2R,5Z)-2-carboxy-4-methylthiazol-5(2H)-ylidene]ethyl phosphate. Residue lysine 135 participates in 4-amino-2-methyl-5-(diphosphooxymethyl)pyrimidine binding. Glycine 162 lines the 2-[(2R,5Z)-2-carboxy-4-methylthiazol-5(2H)-ylidene]ethyl phosphate pocket.

The protein belongs to the thiamine-phosphate synthase family. The cofactor is Mg(2+).

The catalysed reaction is 2-[(2R,5Z)-2-carboxy-4-methylthiazol-5(2H)-ylidene]ethyl phosphate + 4-amino-2-methyl-5-(diphosphooxymethyl)pyrimidine + 2 H(+) = thiamine phosphate + CO2 + diphosphate. It carries out the reaction 2-(2-carboxy-4-methylthiazol-5-yl)ethyl phosphate + 4-amino-2-methyl-5-(diphosphooxymethyl)pyrimidine + 2 H(+) = thiamine phosphate + CO2 + diphosphate. The enzyme catalyses 4-methyl-5-(2-phosphooxyethyl)-thiazole + 4-amino-2-methyl-5-(diphosphooxymethyl)pyrimidine + H(+) = thiamine phosphate + diphosphate. It functions in the pathway cofactor biosynthesis; thiamine diphosphate biosynthesis; thiamine phosphate from 4-amino-2-methyl-5-diphosphomethylpyrimidine and 4-methyl-5-(2-phosphoethyl)-thiazole: step 1/1. Condenses 4-methyl-5-(beta-hydroxyethyl)thiazole monophosphate (THZ-P) and 2-methyl-4-amino-5-hydroxymethyl pyrimidine pyrophosphate (HMP-PP) to form thiamine monophosphate (TMP). The protein is Thiamine-phosphate synthase of Pseudomonas putida (strain W619).